A 471-amino-acid chain; its full sequence is Adenosylhomocysteinase (471 aa).

Substrate is bound by residues threonine 60, aspartate 135, and glutamate 196. 197-199 contacts NAD(+); the sequence is TTT. The substrate site is built by lysine 226 and aspartate 230. Residues asparagine 231, 260–265, glutamate 283, asparagine 318, 339–341, and asparagine 387 each bind NAD(+); these read GYGDVG and IGH.

Belongs to the adenosylhomocysteinase family. Requires NAD(+) as cofactor.

The protein resides in the cytoplasm. The enzyme catalyses S-adenosyl-L-homocysteine + H2O = L-homocysteine + adenosine. It functions in the pathway amino-acid biosynthesis; L-homocysteine biosynthesis; L-homocysteine from S-adenosyl-L-homocysteine: step 1/1. May play a key role in the regulation of the intracellular concentration of adenosylhomocysteine. The sequence is that of Adenosylhomocysteinase from Chlorobium phaeobacteroides (strain DSM 266 / SMG 266 / 2430).